The chain runs to 366 residues: Polyprenyl transferase AOL_s00215g276 (366 aa).

A disordered region spans residues 1-22; the sequence is MESIIARPRTRSSAKEKTQTMS. 7 consecutive transmembrane segments (helical) span residues 53–73, 85–105, 137–157, 160–180, 185–205, 212–232, and 253–273; these read LHTL…CLSA, FLSV…AFCT, IIAF…TLGF, ALVC…KRVV, LVLG…VAGN, AVPM…IYAT, and HMHQ…SFTA. N-linked (GlcNAc...) asparagine glycosylation is present at Asn-277. 2 helical membrane-spanning segments follow: residues 281-301 and 312-332; these read LFWS…LLSL and VFLM…IELW. N-linked (GlcNAc...) asparagine glycosylation occurs at Asn-352.

This sequence belongs to the UbiA prenyltransferase family. The cofactor is Mg(2+).

Its subcellular location is the membrane. Its pathway is secondary metabolite biosynthesis; terpenoid biosynthesis. Functionally, polyprenyl transferase; part of the gene cluster that mediates the biosynthesis of sesquiterpenyl epoxy-cyclohexenoids (SECs) such as anthrobotrisins and arthrosporols, metabolites that possess a novel hybrid carbon skeleton consisting of a polyketide-derived epoxycyclohexenol combined with a terpenoid-derived monocyclic sesquiterpenol substructure (PKS-PTS hybrid). The SEC pathway plays an important role for fungal soil colonization via decreasing fungal nematode-capturing ability. Within the pathway, the polyprenyl transferase catalyzes the farnesylation of toluquinol to yield farnesyl hydroquinone, the first hybrid precursor for biosynthesis of SECs, and farnesyl quinone (34) might be the key precursor for the epoxy ring formation. The pathway begins with the biosynthesis of 6-methylsalicylic acid (6-MSA), the first precursor of the polyketide-derived epoxycyclohexenol in arthrosporols, by the polyketide synthase (PKS) AOL_s00215g283 via condensation of 1 acetate and 3 malonate units. The 6-methylsalicylic acid decarboxylase AOL_s00215g281 then catalyzes the decarboxylation of 6-methylsalicylic acid to yield m-cresol. The cytochrome P450 monooxygenase AOL_s00215g282 further oxidizes m-cresol to yield toluquinol. With the assistance of the oxidoreductase AOL_s00215g277, the polyprenyl transferase AOL_s00215g276 catalyzes the farnesylation of toluquinol to produce farnesyl hydroquinone, the hybrid precursor for biosynthesis of SECs. Farnesyl hydroquinone undergoes epoxidation and then subsequent dehydrogenation to form farnesyl epoxy-quinone, the first and simplest SEC. The cytochrome P450 monooxygenase AOL_s00215g278 and the FAD-dependent monooxygenase AOL_s00215g279 might be involved in the oxygenation of the phenol moiety, most likely in the epoxy formation. The cytochrome P450 monooxygenases AOL_s00215g274 and AOL_s00215g280 are involved in specific regional ketone reductions at respectively C-4 and C-1 of farnesyl epoxy-quinone PubMed:33823587. In Arthrobotrys oligospora (strain ATCC 24927 / CBS 115.81 / DSM 1491) (Nematode-trapping fungus), this protein is Polyprenyl transferase AOL_s00215g276.